Here is a 105-residue protein sequence, read N- to C-terminus: Small ribosomal subunit protein uS10 (105 aa).

The protein belongs to the universal ribosomal protein uS10 family. Part of the 30S ribosomal subunit.

Involved in the binding of tRNA to the ribosomes. The chain is Small ribosomal subunit protein uS10 from Francisella philomiragia subsp. philomiragia (strain ATCC 25017 / CCUG 19701 / FSC 153 / O#319-036).